Here is a 139-residue protein sequence, read N- to C-terminus: Heavy metal-associated isoprenylated plant protein 13 (139 aa).

In terms of domain architecture, HMA spans 3–70 (PMKAVLQLSI…LCNTELVSVE (68 aa)). A disordered region spans residues 70–94 (EVVKPPEKKPEPEKPAPPKPAPAPA). Basic and acidic residues predominate over residues 73 to 85 (KPPEKKPEPEKPA). C136 carries the cysteine methyl ester modification. C136 carries the S-farnesyl cysteine lipid modification. A propeptide spans 137-139 (VIM) (removed in mature form).

Belongs to the HIPP family.

Its function is as follows. Probable heavy-metal-binding protein. This is Heavy metal-associated isoprenylated plant protein 13 from Arabidopsis thaliana (Mouse-ear cress).